Reading from the N-terminus, the 341-residue chain is D-aspartate oxidase (341 aa).

The FAD site is built by aspartate 36, lysine 37, threonine 43, serine 44, methionine 50, glycine 307, and isoleucine 311. The Microbody targeting signal signature appears at 339–341 (SKL).

Belongs to the DAMOX/DASOX family. As to quaternary structure, homotetramer. Interacts with PEX5; the interaction is direct and required for localization of DDO to the peroxisome. It depends on FAD as a cofactor. In terms of tissue distribution, expressed in epithelial cells of the renal proximal tubules (not detected in the glomeruli or renal distal tubules), liver, right atrium of heart, lung, chief cells of the gastric mucosa, choroid plexus, pia mater, brain stem, midbrain, pons, medulla oblongata, hypothalamus, hippocampus, cerebral cortex, cerebellum, ependyma, olfactory bulb and the pituitary, pineal, thyroid and adrenal glands (at protein level).

The protein resides in the peroxisome matrix. It localises to the cytoplasm. Its subcellular location is the cytosol. The catalysed reaction is D-aspartate + O2 + H2O = oxaloacetate + H2O2 + NH4(+). The enzyme catalyses D-glutamate + O2 + H2O = H2O2 + 2-oxoglutarate + NH4(+). Its function is as follows. Selectively catalyzes the oxidative deamination of acidic amino acids. Suppresses the level of D-aspartate in the brain, an amino acid that can act as an agonist for glutamate receptors. Protects the organism from the toxicity of D-amino acids. May also function in the intestine. The sequence is that of D-aspartate oxidase (DDO) from Sus scrofa (Pig).